The sequence spans 104 residues: Replication restart protein PriB (104 aa).

In terms of domain architecture, SSB spans 1–101 (MTNRLTLSGT…LHAEQIELID (101 aa)).

Belongs to the PriB family. In terms of assembly, homodimer. Interacts with PriA and DnaT. Component of the replication restart primosome. Primosome assembly occurs via a 'hand-off' mechanism. PriA binds to replication forks, subsequently PriB then DnaT bind; DnaT then displaces ssDNA to generate the helicase loading substrate.

Its function is as follows. Involved in the restart of stalled replication forks, which reloads the replicative helicase on sites other than the origin of replication; the PriA-PriB pathway is the major replication restart pathway. During primosome assembly it facilitates complex formation between PriA and DnaT on DNA; stabilizes PriA on DNA. Stimulates the DNA unwinding activity of PriA helicase. The protein is Replication restart protein PriB of Salmonella typhi.